Consider the following 848-residue polypeptide: Translation initiation factor IF-2 (848 aa).

Residues 106 to 150 (TEQQTEAENSTNINLSEQTIKNNSHQSSSNTIETTQEKKQNDDLS) form a disordered region. Polar residues predominate over residues 112–139 (AENSTNINLSEQTIKNNSHQSSSNTIET). The region spanning 347-517 (PRAPIITVMG…LLLADMLELK (171 aa)) is the tr-type G domain. The interval 356-363 (GHVDHGKT) is G1. Residue 356 to 363 (GHVDHGKT) participates in GTP binding. The segment at 381–385 (GITQH) is G2. The segment at 403-406 (DTPG) is G3. GTP contacts are provided by residues 403 to 407 (DTPGH) and 457 to 460 (NKID). The interval 457–460 (NKID) is G4. Residues 493 to 495 (SAL) form a G5 region.

Belongs to the TRAFAC class translation factor GTPase superfamily. Classic translation factor GTPase family. IF-2 subfamily.

It is found in the cytoplasm. One of the essential components for the initiation of protein synthesis. Protects formylmethionyl-tRNA from spontaneous hydrolysis and promotes its binding to the 30S ribosomal subunits. Also involved in the hydrolysis of GTP during the formation of the 70S ribosomal complex. This is Translation initiation factor IF-2 from Orientia tsutsugamushi (strain Boryong) (Rickettsia tsutsugamushi).